Reading from the N-terminus, the 1224-residue chain is MKVVKDMIPTKPHDVIWTDAQWQSIYAKGQDILVAAAAGSGKTAVLVERIIQRILRDDVDVDRLLVVTFTNLSAREMKHRVDKRIQEASFKDPNNEHLKNQRIKIHQAQISTLHSFCLKLIQQHYDVLDIDPHFRTSSEAENILLLEQTIDDVLEQHYDKLDPHFIELTEQLSSDRNDDQFRSIIKQLYFFSIANPQPFEWLNQLAQPYKEENKQQQLMQLINDLAMIFMKAGYEELQKSYDLFSMMESVDKQLEVIETERMFITKAIEGKVLNTDVITQHEFMSRFPAINSKIKEANEGMEDALNEAKQHYDKYKSLVMKVKNDYFSRNAEDLQRDMQQLAPRVAYLAQIVQDVIQSFGVQKRSRNILDFSDYEHFALCILTNEDGSPSRIAETYREHFKEILVDEYQDTNRVQEKILSCIKTGEEHDGNLFMVGDVKQSIYKFRQADPSLFIEKYNRFSSSGNESGLRIDLSQNFRSRQEVLSTTNYLFKHMMDEQVGEISYDDAAQLYFGAPYDEVSHPVQLRALVEASSENSDLTGSEQEANYIVEQVKDIINHQNVYDMKTGQYRKATYKDIVILERSFGQARNLQQAFKNNDIPFHVNSKEGYFEQTEVRLVLSFLRTIDNPLQDIYLVGLMRSVIYQFTEEELAEIRVVSPHDDYFYQSIKNYMIDEKADSRLVDKLNRFIQDIQKYQNYSQSQPVYQLIDKFYNDHFVIQYFSGLIGGKGRRANLYGLFNKAVEFENSSFRGLFQFIRFIDELIDRKKDFGEENVVGPNDNVVRMMTIHSSKGLEFPFVIYSGLSKKFNKGDLNAPVILNQQYGLGMDYFDVNKDMAFPSLASVAYRAINEKELISEEMRLIYVALTRAKEQLILVGRVKDEKSLIKYEQLAVSDTHIAVNERLTATNPFVLIYGVLAKHQSPSLPNDQRFERDIDQLNSEVKPRVSIVIDHYEDVSTEEVVNDNEIRTIEELKAINTGNEDVKIKIHQQLSYDYPFKVNTMKPSKQSVSELKRQLETEESNTNYDRVRQYRIGVASYERPKFLTQTKKRKANEIGTLMHTVMQHLPFREQRLTKDELFQYIDRLIDKQLIDEDAKEDIRIDEIMHFIDGPLYMEIAQADNVYTELPFVVNQIKVDGLTSEDEDVSIIQGMIDLIYESDGQFYFVDYKTDAFNRRKGMSDEEIGNQLKEKYQIQMTYYRNTLETILKRPVKGYLYFFKFGTLEIDD.

The 466-residue stretch at 15–480 folds into the UvrD-like helicase ATP-binding domain; sequence VIWTDAQWQS…IDLSQNFRSR (466 aa). 36–43 is a binding site for ATP; sequence AAAGSGKT. The UvrD-like helicase C-terminal domain occupies 497-791; that stretch reads EQVGEISYDD…RMMTIHSSKG (295 aa).

The protein belongs to the helicase family. AddA subfamily. As to quaternary structure, heterodimer of AddA and AddB/RexB. It depends on Mg(2+) as a cofactor.

It carries out the reaction Couples ATP hydrolysis with the unwinding of duplex DNA by translocating in the 3'-5' direction.. It catalyses the reaction ATP + H2O = ADP + phosphate + H(+). In terms of biological role, the heterodimer acts as both an ATP-dependent DNA helicase and an ATP-dependent, dual-direction single-stranded exonuclease. Recognizes the chi site generating a DNA molecule suitable for the initiation of homologous recombination. The AddA nuclease domain is required for chi fragment generation; this subunit has the helicase and 3' -&gt; 5' nuclease activities. The sequence is that of ATP-dependent helicase/nuclease subunit A from Staphylococcus epidermidis (strain ATCC 12228 / FDA PCI 1200).